An 817-amino-acid polypeptide reads, in one-letter code: MANNVNLLYGLPQRVITLPANLIQSKSKIFIGNGDPNCIIGNNCDMYIDKNSNRIFYKCGCNWLLTGTIMGDNGFIGLRGSKGDTGNKGEIGDNGENGDIGQIGDNGSIGSKGIKGMNGFNGSKGIKGDKGTDGIKGDKGQDNFGSKGQKGETGSKGDDGIKGITGSKGFKGDPGTKGENGINGTKGLKGSQGDLGTKGDDGIKGIIGSKGIKGDPGNKGEDGIKGTNGLKGSKGETGSKGDDGTKGITGLKGTKGNSGSKGDDGDKGIQGLKGEFGTKGNVGDKGDTGINGEKGSDGDKGNKGLDGIKGDLGDDGIKGDKGIKGLKGDTGNSDKGDKGSKGDSNFSKGGIGDKGSKGDNGSKGESGDKGIFGLKGSKGDIGDKGEKGDLGDTGLKGSKGLKGSKGDKGLVNVKGENGFVGDLGSKGSKGDKGESGDKGDIGIKGDKGAKGVTGDKGDKGTKGFIGNVGFKGDTGDKGIIGDNGSKGIKGSSNNKGDKGDKGNTGDKGITNTKGIKGDKGIKGSKGDLGSVGEKGEKGTKGDIGTKGETGLKGIIGDKGELGSKGIKGLSESFIESFYQEIPGTFVSTVPDGAVFGYLSAAGGGGGGGGIELSSLAGGGGGGSGCFYLLPLTVYPGSQFTGTIGQGGSGSTISAVLATKGSDTVINYGTLTFIAHGGFPGSSTLELGGNGDTVTYPLPVTPAPGGTGGNMTNGSNGSTSIFMFSGAGGGASGLNSGFNGGNVGPYVGGTSSPQIAGGGGGASAFGNGGRGGNTTQAATKGEYGSGGGGGSEFSPSGSTNGGDGGDGFVRIDYFMVPR.

3 Collagen-like domains span residues 83–142 (GDTG…KGQD), 145–264 (GSKG…KGDD), and 268–327 (GIQG…KGLK). Disordered regions lie at residues 87–107 (NKGE…GDNG), 120–458 (FNGS…DKGD), and 479–543 (IIGD…KGDI). N-linked (GlcNAc...) asparagine; by host glycosylation is found at Asn106 and Asn121. 2 stretches are compositionally biased toward basic and acidic residues: residues 126-141 (IKGD…DKGQ) and 149-161 (QKGE…DDGI). Asn183 carries an N-linked (GlcNAc...) asparagine; by host glycan. Basic and acidic residues-rich tracts occupy residues 212–224 (IKGD…EDGI) and 233–245 (SKGE…DDGT). The span at 246 to 260 (KGITGLKGTKGNSGS) shows a compositional bias: low complexity. Over residues 294 to 341 (KGSDGDKGNKGLDGIKGDLGDDGIKGDKGIKGLKGDTGNSDKGDKGSK) the composition is skewed to basic and acidic residues. Asn345 and Asn360 each carry an N-linked (GlcNAc...) asparagine; by host glycan. Collagen-like domains are found at residues 352–411 (GDKG…KGLV) and 430–489 (GDKG…KGIK). Basic and acidic residues-rich tracts occupy residues 354–368 (KGSK…ESGD), 377–390 (SKGD…KGDL), and 428–458 (SKGD…DKGD). Over residues 480-494 (IGDNGSKGIKGSSNN) the composition is skewed to low complexity. Asn483 carries N-linked (GlcNAc...) asparagine; by host glycosylation. Basic and acidic residues-rich tracts occupy residues 495–504 (KGDKGDKGNT), 515–525 (IKGDKGIKGSK), and 533–543 (EKGEKGTKGDI). One can recognise a Collagen-like 6 domain in the interval 512-570 (TKGIKGDKGIKGSKGDLGSVGEKGEKGTKGDIGTKGETGLKGIIGDKGELGSKGIKGLS). N-linked (GlcNAc...) asparagine; by host glycosylation is found at Asn709, Asn712, and Asn715. Gly residues predominate over residues 757-771 (GGGGASAFGNGGRGG). A disordered region spans residues 757–804 (GGGGASAFGNGGRGGNTTQAATKGEYGSGGGGGSEFSPSGSTNGGDGG). N-linked (GlcNAc...) asparagine; by host glycosylation occurs at Asn772.

May be hydroxylated on lysine by the viral-encoded procollagen-lysine,2-oxoglutarate 5-dioxygenase.

Its subcellular location is the virion. May participate in the formation of a layer of cross-linked glycosylated fibrils at the viral surface thus giving it a hairy-like appearance. This chain is Collagen-like protein 4, found in Acanthamoeba polyphaga (Amoeba).